The primary structure comprises 162 residues: ATP synthase subunit b (162 aa).

A helical membrane pass occupies residues 6-25 (TLFTLVTFLVLMLAVGKVAW).

The protein belongs to the ATPase B chain family. F-type ATPases have 2 components, F(1) - the catalytic core - and F(0) - the membrane proton channel. F(1) has five subunits: alpha(3), beta(3), gamma(1), delta(1), epsilon(1). F(0) has three main subunits: a(1), b(2) and c(10-14). The alpha and beta chains form an alternating ring which encloses part of the gamma chain. F(1) is attached to F(0) by a central stalk formed by the gamma and epsilon chains, while a peripheral stalk is formed by the delta and b chains.

It localises to the cell membrane. Functionally, f(1)F(0) ATP synthase produces ATP from ADP in the presence of a proton or sodium gradient. F-type ATPases consist of two structural domains, F(1) containing the extramembraneous catalytic core and F(0) containing the membrane proton channel, linked together by a central stalk and a peripheral stalk. During catalysis, ATP synthesis in the catalytic domain of F(1) is coupled via a rotary mechanism of the central stalk subunits to proton translocation. Component of the F(0) channel, it forms part of the peripheral stalk, linking F(1) to F(0). The polypeptide is ATP synthase subunit b (Lacticaseibacillus paracasei (strain ATCC 334 / BCRC 17002 / CCUG 31169 / CIP 107868 / KCTC 3260 / NRRL B-441) (Lactobacillus paracasei)).